Consider the following 368-residue polypeptide: Zinc finger protein 24 (368 aa).

K22 participates in a covalent cross-link: Glycyl lysine isopeptide (Lys-Gly) (interchain with G-Cter in SUMO2). Residue K27 forms a Glycyl lysine isopeptide (Lys-Gly) (interchain with G-Cter in SUMO1); alternate linkage. A Glycyl lysine isopeptide (Lys-Gly) (interchain with G-Cter in SUMO2); alternate cross-link involves residue K27. The 83-residue stretch at R52–L134 folds into the SCAN box domain. 2 positions are modified to phosphoserine: S132 and S142. Residues K147, K177, and K236 each participate in a glycyl lysine isopeptide (Lys-Gly) (interchain with G-Cter in SUMO2) cross-link. The C2H2-type 1 zinc-finger motif lies at H251–H273. A necessary and sufficient for nuclear localization region spans residues H251–H301. Position 274 is a phosphoserine (S274). Residues K277 and K286 each participate in a glycyl lysine isopeptide (Lys-Gly) (interchain with G-Cter in SUMO2) cross-link. C2H2-type zinc fingers lie at residues Y279–H301, Y307–H329, and Y335–H357. At S292 the chain carries Phosphoserine. Y335 bears the Phosphotyrosine mark. Residues K361 and K367 each participate in a glycyl lysine isopeptide (Lys-Gly) (interchain with G-Cter in SUMO2) cross-link.

This sequence belongs to the krueppel C2H2-type zinc-finger protein family. Sumoylated.

It localises to the nucleus. Transcription factor required for myelination of differentiated oligodendrocytes. Required for the conversion of oligodendrocytes from the premyelinating to the myelinating state. In the developing central nervous system (CNS), involved in the maintenance in the progenitor stage by promoting the cell cycle. Specifically binds to the 5'-TCAT-3' DNA sequence. Has transcription repressor activity in vitro. This is Zinc finger protein 24 (ZNF24) from Pan paniscus (Pygmy chimpanzee).